Reading from the N-terminus, the 394-residue chain is Elongation factor Tu (394 aa).

Residues 10–204 (KPHVNVGTIG…ALDTYIPEPE (195 aa)) form the tr-type G domain. The interval 19–26 (GHVDHGKT) is G1. 19-26 (GHVDHGKT) serves as a coordination point for GTP. Threonine 26 provides a ligand contact to Mg(2+). The tract at residues 60 to 64 (GITIN) is G2. The G3 stretch occupies residues 81–84 (DCPG). GTP-binding positions include 81-85 (DCPGH) and 136-139 (NKCD). Positions 136-139 (NKCD) are G4. Positions 174-176 (SAL) are G5.

Belongs to the TRAFAC class translation factor GTPase superfamily. Classic translation factor GTPase family. EF-Tu/EF-1A subfamily. Monomer.

It localises to the cytoplasm. It catalyses the reaction GTP + H2O = GDP + phosphate + H(+). In terms of biological role, GTP hydrolase that promotes the GTP-dependent binding of aminoacyl-tRNA to the A-site of ribosomes during protein biosynthesis. This is Elongation factor Tu from Colwellia psychrerythraea (strain 34H / ATCC BAA-681) (Vibrio psychroerythus).